Here is a 207-residue protein sequence, read N- to C-terminus: Large ribosomal subunit protein uL4 (207 aa).

The disordered stretch occupies residues 50–76 (AVKNRSAVSGGGRKPWKQKGTGRARQG).

Belongs to the universal ribosomal protein uL4 family. As to quaternary structure, part of the 50S ribosomal subunit.

Its function is as follows. One of the primary rRNA binding proteins, this protein initially binds near the 5'-end of the 23S rRNA. It is important during the early stages of 50S assembly. It makes multiple contacts with different domains of the 23S rRNA in the assembled 50S subunit and ribosome. Functionally, forms part of the polypeptide exit tunnel. The chain is Large ribosomal subunit protein uL4 from Macrococcus caseolyticus (strain JCSC5402) (Macrococcoides caseolyticum).